Reading from the N-terminus, the 72-residue chain is Late effector protein 1 (72 aa).

Positions 1–22 are cleaved as a signal peptide; the sequence is MKCYLVVVVAALCTLVAQGSVG. A glycan (N-linked (GlcNAc...) asparagine) is linked at Asn-66.

It belongs to the lep1 family. As to quaternary structure, interacts at the cell wall with secreted rep1 repellent peptides.

The protein resides in the secreted. Its subcellular location is the cell wall. Functionally, core effector contributing to spore formation and tumor formation at the host plant. Modulates surface hydrophobicity promoting cell-cell or cell-surface contacts. Lep1 and rep1 interact in aerial hyphae to form a strong hydrophobic layer. Plays a crucial role in hyphal aggregation that might be a prerequisite for strong proliferation of diploid cells and for induction of the morphological changes associated with spore formation. The sequence is that of Late effector protein 1 from Sporisorium reilianum (strain SRZ2) (Maize head smut fungus).